The chain runs to 219 residues: UPF0502 protein GSU0233 (219 aa).

Belongs to the UPF0502 family.

This chain is UPF0502 protein GSU0233, found in Geobacter sulfurreducens (strain ATCC 51573 / DSM 12127 / PCA).